The sequence spans 134 residues: Phosphoribosyl-ATP pyrophosphatase (134 aa).

It belongs to the PRA-PH family.

The protein resides in the cytoplasm. The catalysed reaction is 1-(5-phospho-beta-D-ribosyl)-ATP + H2O = 1-(5-phospho-beta-D-ribosyl)-5'-AMP + diphosphate + H(+). The protein operates within amino-acid biosynthesis; L-histidine biosynthesis; L-histidine from 5-phospho-alpha-D-ribose 1-diphosphate: step 2/9. This Verminephrobacter eiseniae (strain EF01-2) protein is Phosphoribosyl-ATP pyrophosphatase.